The following is a 129-amino-acid chain: Small ribosomal subunit protein uS11 (129 aa).

This sequence belongs to the universal ribosomal protein uS11 family. As to quaternary structure, part of the 30S ribosomal subunit. Interacts with proteins S7 and S18. Binds to IF-3.

Its function is as follows. Located on the platform of the 30S subunit, it bridges several disparate RNA helices of the 16S rRNA. Forms part of the Shine-Dalgarno cleft in the 70S ribosome. The protein is Small ribosomal subunit protein uS11 of Haemophilus influenzae (strain ATCC 51907 / DSM 11121 / KW20 / Rd).